Consider the following 487-residue polypeptide: Glutamate mutase epsilon subunit (487 aa).

Position 62 (Arg62) interacts with L-glutamate. Gly64 lines the adenosylcob(III)alamin pocket. L-glutamate is bound at residue Arg96. Asn119 lines the adenosylcob(III)alamin pocket. L-glutamate contacts are provided by residues Arg145–His146, Glu167, and Tyr173. Position 176 (Pro176) interacts with adenosylcob(III)alamin. An L-glutamate-binding site is contributed by Tyr177. 3 residues coordinate adenosylcob(III)alamin: Phe289, Lys318, and Glu322. Residues Ser465–Asp487 form a disordered region.

The protein belongs to the methylaspartate mutase GlmE subunit family. As to quaternary structure, heterotetramer composed of 2 epsilon subunits (GlmE) and 2 sigma subunits (GlmS). GlmE exists as a homodimer and GlmS as a monomer. Requires adenosylcob(III)alamin as cofactor.

It carries out the reaction (2S,3S)-3-methyl-L-aspartate = L-glutamate. Its pathway is amino-acid degradation; L-glutamate degradation via mesaconate pathway; acetate and pyruvate from L-glutamate: step 1/4. In terms of biological role, catalyzes the carbon skeleton rearrangement of L-glutamate to L-threo-3-methylaspartate ((2S,3S)-3-methylaspartate). In Haloarcula marismortui (strain ATCC 43049 / DSM 3752 / JCM 8966 / VKM B-1809) (Halobacterium marismortui), this protein is Glutamate mutase epsilon subunit.